The chain runs to 407 residues: Peptidase T (407 aa).

Residue histidine 77 coordinates Zn(2+). The active site involves aspartate 79. Aspartate 140 lines the Zn(2+) pocket. The active-site Proton acceptor is the glutamate 174. Zn(2+) is bound by residues glutamate 175, aspartate 197, and histidine 379.

This sequence belongs to the peptidase M20B family. Zn(2+) is required as a cofactor.

It is found in the cytoplasm. It catalyses the reaction Release of the N-terminal residue from a tripeptide.. Functionally, cleaves the N-terminal amino acid of tripeptides. The chain is Peptidase T from Bacteroides fragilis (strain YCH46).